A 51-amino-acid chain; its full sequence is Large ribosomal subunit protein bL33 (51 aa).

It belongs to the bacterial ribosomal protein bL33 family.

This Vesicomyosocius okutanii subsp. Calyptogena okutanii (strain HA) protein is Large ribosomal subunit protein bL33.